We begin with the raw amino-acid sequence, 870 residues long: Translation initiation factor IF-2 (870 aa).

Residues 49–284 (SFQNSAPAEK…TKRKERPLPE (236 aa)) are disordered. Composition is skewed to basic and acidic residues over residues 70–81 (RKNEKKQEDNAG) and 94–109 (QNND…RDHS). Low complexity predominate over residues 116-127 (KPKAAALLQQFK). 2 stretches are compositionally biased toward basic and acidic residues: residues 144–159 (AKKE…KKEQ) and 168–183 (NKES…EKKV). Residues 254–279 (RKRRKNKNKKRKQEQKPKKQITKRKE) are compositionally biased toward basic residues. Residues 371–540 (KRPPVVTIMG…LLQADMMELK (170 aa)) enclose the tr-type G domain. The tract at residues 380–387 (GHVDHGKT) is G1. 380 to 387 (GHVDHGKT) contacts GTP. Residues 405-409 (GITQK) form a G2 region. The G3 stretch occupies residues 426-429 (DTPG). Residues 426-430 (DTPGH) and 480-483 (NKMD) contribute to the GTP site. The tract at residues 480–483 (NKMD) is G4. The interval 516–518 (SAR) is G5.

This sequence belongs to the TRAFAC class translation factor GTPase superfamily. Classic translation factor GTPase family. IF-2 subfamily.

The protein localises to the cytoplasm. One of the essential components for the initiation of protein synthesis. Protects formylmethionyl-tRNA from spontaneous hydrolysis and promotes its binding to the 30S ribosomal subunits. Also involved in the hydrolysis of GTP during the formation of the 70S ribosomal complex. The sequence is that of Translation initiation factor IF-2 from Lactobacillus helveticus (strain DPC 4571).